A 212-amino-acid chain; its full sequence is Sclerostin (212 aa).

A signal peptide spans 1–23; sequence MQLSLALCLVCLLVHAAFRVVEG. The N-linked (GlcNAc...) asparagine glycan is linked to Asn52. Intrachain disulfides connect Cys79-Cys133, Cys93-Cys147, Cys104-Cys164, and Cys108-Cys166. A CTCK domain is found at 81–171; it reads ELHFTRYVTD…ASCKCKRLTR (91 aa). Asn174 is a glycosylation site (N-linked (GlcNAc...) asparagine). The tract at residues 179–212 is disordered; that stretch reads KDFGPEAARPQTGRKLRPRARGTKASRAELENAY. Residues 190-202 are compositionally biased toward basic residues; that stretch reads TGRKLRPRARGTK.

Belongs to the sclerostin family. As to quaternary structure, interacts with LRP4 (via the extracellular domain); the interaction facilitates the inhibition of Wnt signaling. Interacts with LRP5 (via the first two YWTD-EGF repeat domains); the interaction inhibits Wnt-mediated signaling. Interacts with LRP6.

The protein localises to the secreted. It localises to the extracellular space. Its subcellular location is the extracellular matrix. Its function is as follows. Negative regulator of bone growth that acts through inhibition of Wnt signaling and bone formation. In Bos taurus (Bovine), this protein is Sclerostin.